The chain runs to 558 residues: Phosphatidylserine lipase ABHD16A (558 aa).

The next 2 helical transmembrane spans lie at 60–80 (ILALASVFWSISYYSSPFAFF) and 93–113 (VVPFSHYAGTLLVLLAGVACL). Over 114-558 (RGIGRWTNPQ…AQHFQMPWCL (445 aa)) the chain is Cytoplasmic. In terms of domain architecture, AB hydrolase-1 spans 281 to 407 (LVICCEGNAG…LVTRTVRQHL (127 aa)). Residues serine 355, aspartate 430, and histidine 507 each act as charge relay system in the active site.

Belongs to the AB hydrolase superfamily. ABHD16 family.

The protein localises to the membrane. It catalyses the reaction 1-heptadecanoyl-2-(5Z,8Z,11Z,14Z-eicosatetraenoyl)-sn-glycero-3-phosphoserine + H2O = 1-heptadecanoyl-sn-glycero-3-phosphoserine + (5Z,8Z,11Z,14Z)-eicosatetraenoate + H(+). It carries out the reaction 1-hexadecanoyl-2-(9Z-octadecenoyl)-sn-glycero-3-phospho-L-serine + H2O = 1-hexadecanoyl-sn-glycero-3-phospho-L-serine + (9Z)-octadecenoate + H(+). The enzyme catalyses 1-octadecanoyl-2-(9Z,12Z-octadecadienoyl)-sn-glycero-3-phosphoserine + H2O = 1-octadecanoyl-sn-glycero-3-phosphoserine + (9Z,12Z)-octadecadienoate + H(+). The catalysed reaction is 1-heptadecanoyl-2-(5Z,8Z,11Z,14Z-eicosatetraenoyl)-sn-glycero-3-phosphocholine + H2O = 1-heptadecanoyl-sn-glycero-3-phosphocholine + (5Z,8Z,11Z,14Z)-eicosatetraenoate + H(+). It catalyses the reaction 1-hexadecanoyl-2-(9Z-octadecenoyl)-sn-glycero-3-phosphoglycerol + H2O = 1-hexadecanoyl-sn-glycero-3-phosphoglycerol + (9Z)-octadecenoate + H(+). It carries out the reaction 1-hexadecanoyl-2-(9Z-octadecenoyl)-sn-glycero-3-phospho-(1D-myo-inositol) + H2O = 1-hexadecanoyl-sn-glycero-3-phospho-(1D-myo-inositol) + (9Z)-octadecenoate + H(+). The enzyme catalyses 1-heptadecanoyl-2-(5Z,8Z,11Z,14Z-eicosatetraenoyl)-sn-glycero-3-phosphoethanolamine + H2O = 1-heptadecanoyl-sn-glycero-3-phosphoethanolamine + (5Z,8Z,11Z,14Z)-eicosatetraenoate + H(+). The catalysed reaction is 1-hexadecanoyl-2-(9Z-octadecenoyl)-sn-glycero-3-phospho-(1'-sn-glycerol) + H2O = 1-hexadecanoyl-sn-glycero-3-phospho-(1'-sn-glycerol) + (9Z)-octadecenoate + H(+). It catalyses the reaction Hydrolyzes glycerol monoesters of long-chain fatty acids.. It carries out the reaction 1-tetradecanoylglycerol + H2O = tetradecanoate + glycerol + H(+). The enzyme catalyses 2-hexadecanoylglycerol + H2O = glycerol + hexadecanoate + H(+). The catalysed reaction is 1-(9Z-octadecenoyl)-glycerol + H2O = glycerol + (9Z)-octadecenoate + H(+). It catalyses the reaction 2-(9Z-octadecenoyl)-glycerol + H2O = glycerol + (9Z)-octadecenoate + H(+). It carries out the reaction 2-(9Z,12Z-octadecadienoyl)-glycerol + H2O = (9Z,12Z)-octadecadienoate + glycerol + H(+). The enzyme catalyses 1-(5Z,8Z,11Z,14Z-eicosatetraenoyl)-glycerol + H2O = glycerol + (5Z,8Z,11Z,14Z)-eicosatetraenoate + H(+). The catalysed reaction is 2-(5Z,8Z,11Z,14Z-eicosatetraenoyl)-glycerol + H2O = glycerol + (5Z,8Z,11Z,14Z)-eicosatetraenoate + H(+). It catalyses the reaction prostaglandin D2-1-glycerol ester + H2O = prostaglandin D2 + glycerol + H(+). It carries out the reaction 2-glyceryl-15-deoxy-Delta(12,14)-prostaglandin J2 + H2O = 15-deoxy-Delta(12,14)-prostaglandin J2 + glycerol + H(+). The enzyme catalyses 1-(9Z,12Z-octadecadienoyl)-glycerol + H2O = (9Z,12Z)-octadecadienoate + glycerol + H(+). Functionally, phosphatidylserine (PS) lipase that mediates the hydrolysis of phosphatidylserine to generate lysophosphatidylserine (LPS). LPS constitutes a class of signaling lipids that regulates immunological and neurological processes. Has no activity towards diacylglycerol, triacylglycerol or lysophosphatidylserine lipase. Also has monoacylglycerol lipase activity, with preference for 1-(9Z,12Z-octadecadienoyl)-glycerol (1-LG) and 2-glyceryl-15-deoxy-Delta(12,14)-prostaglandin J2 (15d-PGJ(2)-G). In Rattus norvegicus (Rat), this protein is Phosphatidylserine lipase ABHD16A.